We begin with the raw amino-acid sequence, 27 residues long: Protein YkiD (27 aa).

The chain is Protein YkiD from Escherichia coli (strain K12).